Reading from the N-terminus, the 676-residue chain is Probable metal-nicotianamine transporter YSL6 (676 aa).

The next 13 membrane-spanning stretches (helical) occupy residues 38–58, 62–82, 110–130, 154–174, 276–296, 321–341, 392–412, 413–433, 452–472, 510–530, 561–581, 604–624, and 639–659; these read ITIRGLTVSALLGTLFCIITH, LTVGIIPSLNVAAGLLGFFFV, CVVACYGLAFSGGFGSYLIAM, GLWWMIGFLFVVSFLGLFSLV, IVNCSVLLGAIISWGILWPFV, VFIAIAIILGDGLYNLVKIIA, FAIAGYVGLAAISTATIPIIF, PPLKWYFVLCSYFIAPALAFC, IGLFIIASVVGSDGGVIAGLA, VGTAMGCVIAPLTFWLFWTAF, LPKHCLALCYGFFIAALIVNL, FYIGAYFAIDMFVGTVILFVW, and VASGLICGDGIWTIPSAILSI.

The protein belongs to the YSL (TC 2.A.67.2) family.

It is found in the membrane. Functionally, may be involved in the transport of nicotianamine-chelated metals. This chain is Probable metal-nicotianamine transporter YSL6 (YSL6), found in Arabidopsis thaliana (Mouse-ear cress).